Reading from the N-terminus, the 184-residue chain is Protein GrpE (184 aa).

The protein belongs to the GrpE family. Homodimer.

The protein resides in the cytoplasm. Participates actively in the response to hyperosmotic and heat shock by preventing the aggregation of stress-denatured proteins, in association with DnaK and GrpE. It is the nucleotide exchange factor for DnaK and may function as a thermosensor. Unfolded proteins bind initially to DnaJ; upon interaction with the DnaJ-bound protein, DnaK hydrolyzes its bound ATP, resulting in the formation of a stable complex. GrpE releases ADP from DnaK; ATP binding to DnaK triggers the release of the substrate protein, thus completing the reaction cycle. Several rounds of ATP-dependent interactions between DnaJ, DnaK and GrpE are required for fully efficient folding. This is Protein GrpE from Pseudomonas putida (strain GB-1).